Consider the following 339-residue polypeptide: Undifferentiated embryonic cell transcription factor 1 (339 aa).

2 disordered regions span residues 1–62 (MLLR…QRTP) and 144–270 (MGLL…QVAP). Residues serine 15, serine 18, serine 48, and serine 54 each carry the phosphoserine modification. The segment covering 154–170 (RVRRRSTGPGRPQRRGR) has biased composition (basic residues). 2 stretches are compositionally biased toward low complexity: residues 171-193 (SSLS…PLAA) and 218-229 (TSSPPLTSTDTL). Positions 261–270 (GRASSPQVAP) are enriched in polar residues. A leucine-zipper region spans residues 279 to 310 (QTLTHLGDISTVLGPLRDQLSTLNQHVEHLRG).

As to quaternary structure, binds to the N-terminal region of ATF2. Associates with the TFIID complex through interaction with TBP. In terms of processing, phosphorylated. As to expression, expressed mainly in pluripotent cells with expression rapidly down-regulated upon cell differentiation.

It localises to the nucleus. In terms of biological role, acts as a transcriptional coactivator of ATF2. The chain is Undifferentiated embryonic cell transcription factor 1 from Mus musculus (Mouse).